We begin with the raw amino-acid sequence, 287 residues long: Protoheme IX farnesyltransferase (287 aa).

A run of 8 helical transmembrane segments spans residues Ile9–Leu29, Leu31–Ala51, Ile94–Ile114, Val132–Leu152, Trp158–Leu178, Ala202–Phe222, Val228–Leu248, and Leu267–Leu287.

The protein belongs to the UbiA prenyltransferase family. Protoheme IX farnesyltransferase subfamily.

It is found in the cell inner membrane. The catalysed reaction is heme b + (2E,6E)-farnesyl diphosphate + H2O = Fe(II)-heme o + diphosphate. Its pathway is porphyrin-containing compound metabolism; heme O biosynthesis; heme O from protoheme: step 1/1. Its function is as follows. Converts heme B (protoheme IX) to heme O by substitution of the vinyl group on carbon 2 of heme B porphyrin ring with a hydroxyethyl farnesyl side group. This chain is Protoheme IX farnesyltransferase, found in Rhodopirellula baltica (strain DSM 10527 / NCIMB 13988 / SH1).